Reading from the N-terminus, the 164-residue chain is MDMTNAQRLILSNQYKMMTMLDPENAERYRRQQTIVERGFGLQMRELDRDFGEMSEDTCRTIINIMEMHHALQVSWGNLKEKQDLDERRISFLGFDAATESRYLSYVRFMVNTEGRYTHFDSGTHGFNSQTPMWDKYQRMLAIWQSCPRQYHLSAVEISQIINA.

Belongs to the UPF0304 family.

The chain is UPF0304 protein YPDSF_1971 from Yersinia pestis (strain Pestoides F).